Consider the following 366-residue polypeptide: Carbamoyl phosphate synthase small chain (366 aa).

The segment at 1-170 (MLKKRYLVLE…TKSPYVSTGY (170 aa)) is CPSase. S47, G221, and G223 together coordinate L-glutamine. Residues 173 to 360 (SVVLVDFGKK…IDMINEYKTK (188 aa)) enclose the Glutamine amidotransferase type-1 domain. C248 functions as the Nucleophile in the catalytic mechanism. Positions 249, 252, 290, 292, and 293 each coordinate L-glutamine. Residues H333 and E335 contribute to the active site.

This sequence belongs to the CarA family. As to quaternary structure, composed of two chains; the small (or glutamine) chain promotes the hydrolysis of glutamine to ammonia, which is used by the large (or ammonia) chain to synthesize carbamoyl phosphate. Tetramer of heterodimers (alpha,beta)4.

It catalyses the reaction hydrogencarbonate + L-glutamine + 2 ATP + H2O = carbamoyl phosphate + L-glutamate + 2 ADP + phosphate + 2 H(+). The enzyme catalyses L-glutamine + H2O = L-glutamate + NH4(+). It functions in the pathway amino-acid biosynthesis; L-arginine biosynthesis; carbamoyl phosphate from bicarbonate: step 1/1. Its pathway is pyrimidine metabolism; UMP biosynthesis via de novo pathway; (S)-dihydroorotate from bicarbonate: step 1/3. Functionally, small subunit of the glutamine-dependent carbamoyl phosphate synthetase (CPSase). CPSase catalyzes the formation of carbamoyl phosphate from the ammonia moiety of glutamine, carbonate, and phosphate donated by ATP, constituting the first step of 2 biosynthetic pathways, one leading to arginine and/or urea and the other to pyrimidine nucleotides. The small subunit (glutamine amidotransferase) binds and cleaves glutamine to supply the large subunit with the substrate ammonia. In Staphylococcus saprophyticus subsp. saprophyticus (strain ATCC 15305 / DSM 20229 / NCIMB 8711 / NCTC 7292 / S-41), this protein is Carbamoyl phosphate synthase small chain.